The following is a 388-amino-acid chain: Arginine biosynthesis bifunctional protein ArgJ (388 aa).

Residues threonine 150, lysine 172, threonine 183, glutamate 263, asparagine 383, and serine 388 each coordinate substrate. Catalysis depends on threonine 183, which acts as the Nucleophile.

Belongs to the ArgJ family. As to quaternary structure, heterotetramer of two alpha and two beta chains.

It is found in the cytoplasm. It catalyses the reaction N(2)-acetyl-L-ornithine + L-glutamate = N-acetyl-L-glutamate + L-ornithine. The enzyme catalyses L-glutamate + acetyl-CoA = N-acetyl-L-glutamate + CoA + H(+). The protein operates within amino-acid biosynthesis; L-arginine biosynthesis; L-ornithine and N-acetyl-L-glutamate from L-glutamate and N(2)-acetyl-L-ornithine (cyclic): step 1/1. It functions in the pathway amino-acid biosynthesis; L-arginine biosynthesis; N(2)-acetyl-L-ornithine from L-glutamate: step 1/4. Its function is as follows. Catalyzes two activities which are involved in the cyclic version of arginine biosynthesis: the synthesis of N-acetylglutamate from glutamate and acetyl-CoA as the acetyl donor, and of ornithine by transacetylation between N(2)-acetylornithine and glutamate. The sequence is that of Arginine biosynthesis bifunctional protein ArgJ from Corynebacterium glutamicum (strain ATCC 13032 / DSM 20300 / JCM 1318 / BCRC 11384 / CCUG 27702 / LMG 3730 / NBRC 12168 / NCIMB 10025 / NRRL B-2784 / 534).